An 868-amino-acid chain; its full sequence is E3 ubiquitin-protein ligase TRIM71 (868 aa).

Ala-2 bears the N-acetylalanine mark. The segment at 12 to 89 (CLLCKEMCGS…PLKLRCPVCD (78 aa)) adopts an RING-type zinc-finger fold. The segment covering 26-41 (SSNSSASSSSSQTSTS) has biased composition (low complexity). Disordered stretches follow at residues 26-50 (SSNS…GGPG) and 121-186 (ADEP…GSPS). Over residues 142–153 (SNHRHHAHHAHP) the composition is skewed to basic residues. Over residues 159 to 176 (APPPPLPPAPPPPAPPRS) the composition is skewed to pro residues. The span at 177 to 186 (APGGPAGSPS) shows a compositional bias: low complexity. A B box-type 1; atypical zinc finger spans residues 191–238 (RRPHGCSSCDEGNAASSRCLDCQEHLCDNCVRAHQRVRLTKDHYIERG). Residues 273-314 (ERLGFCQHHDDEVLHLYCDTCSVPICRECTVGRHGGHSFVYL) form a B box-type 2 zinc finger. Residues Cys-278, His-281, Cys-301, and His-306 each coordinate Zn(2+). Residues 391–427 (QVKAKSLYLQVEKLRQNLNKLESTISAVQQVLEEGRA) adopt a coiled-coil conformation. The Filamin repeat unit spans residues 479-580 (SSGAFAPLTK…IENSPFKVVV (102 aa)). 6 NHL repeats span residues 593–636 (GLSF…FKPC), 640–683 (HHKF…FTFE), 687–730 (LLKF…FGPD), 734–777 (LNKY…IHPD), 781–824 (ARFL…FESN), and 828–868 (LCKF…ILIF).

This sequence belongs to the TRIM/RBCC family. Interacts (via NHL repeats) with AGO2; the interaction increases in presence of RNA. Interacts with HSP90AA1. Interacts (via NHL repeats) with MOV10, PABPC1, PUM1, PUM2, STAU2, XRN1 and XRN2 in an RNA-dependent manner. Interacts with SHCBP1; leading to enhance its stability. Post-translationally, autoubiquitinated.

It localises to the cytoplasm. It is found in the P-body. The catalysed reaction is S-ubiquitinyl-[E2 ubiquitin-conjugating enzyme]-L-cysteine + [acceptor protein]-L-lysine = [E2 ubiquitin-conjugating enzyme]-L-cysteine + N(6)-ubiquitinyl-[acceptor protein]-L-lysine.. It functions in the pathway protein modification; protein ubiquitination. Its function is as follows. E3 ubiquitin-protein ligase that cooperates with the microRNAs (miRNAs) machinery and promotes embryonic stem cells proliferation and maintenance. Binds to miRNAs and associates with AGO2, participating in post-transcriptional repression of transcripts such as CDKN1A. In addition, participates in post-transcriptional mRNA repression in a miRNA independent mechanism. Facilitates the G1-S transition to promote rapid embryonic stem cell self-renewal by repressing CDKN1A expression. Required to maintain proliferation and prevent premature differentiation of neural progenitor cells during early neural development: positively regulates FGF signaling by controlling the stability of SHCBP1. Specific regulator of miRNA biogenesis. Binds to miRNA MIR29A hairpin and postranscriptionally modulates MIR29A levels, which indirectly regulates TET proteins expression. The polypeptide is E3 ubiquitin-protein ligase TRIM71 (TRIM71) (Bos taurus (Bovine)).